Reading from the N-terminus, the 580-residue chain is Formate--tetrahydrofolate ligase (580 aa).

Residue 83–90 (TPMGEGKT) participates in ATP binding.

Belongs to the formate--tetrahydrofolate ligase family.

It carries out the reaction (6S)-5,6,7,8-tetrahydrofolate + formate + ATP = (6R)-10-formyltetrahydrofolate + ADP + phosphate. It participates in one-carbon metabolism; tetrahydrofolate interconversion. The chain is Formate--tetrahydrofolate ligase from Haloquadratum walsbyi (strain DSM 16790 / HBSQ001).